Here is a 233-residue protein sequence, read N- to C-terminus: Probable translation initiation factor, mitochondrial (233 aa).

A mitochondrion-targeting transit peptide spans 1–39 (MNSYLQFPHRKLFIQFSYSLTSVFRKCQSRTFMNSQFAS).

It belongs to the IF-3 family.

It is found in the mitochondrion. May be involved in mitochondrial translation initiation. In Schizosaccharomyces pombe (strain 972 / ATCC 24843) (Fission yeast), this protein is Probable translation initiation factor, mitochondrial.